A 109-amino-acid polypeptide reads, in one-letter code: A-type ATP synthase subunit F (109 aa).

This sequence belongs to the V-ATPase F subunit family. In terms of assembly, has multiple subunits with at least A(3), B(3), C, D, E, F, H, I and proteolipid K(x).

Its subcellular location is the cell membrane. Functionally, component of the A-type ATP synthase that produces ATP from ADP in the presence of a proton gradient across the membrane. The protein is A-type ATP synthase subunit F of Halorubrum lacusprofundi (strain ATCC 49239 / DSM 5036 / JCM 8891 / ACAM 34).